A 221-amino-acid polypeptide reads, in one-letter code: Transcription repressor OFP8 (221 aa).

Acidic residues predominate over residues 124-138; that stretch reads EDEGDKEESEDDDSD. Positions 124–147 are disordered; sequence EDEGDKEESEDDDSDTLFSSRSFS. The OVATE domain maps to 158–217; it reads VVKKSKDPYEDFRTSMVEMIVERQIFAPAELQQLLQCFLSLNSRQHHKVIVQVFLEIYAT.

Expressed in roots, rosette and cauline leaves, shoots, stems, flower buds and siliques.

It localises to the nucleus. Transcriptional repressor that regulates multiple aspects of plant growth and development through the regulation of BEL1-LIKE (BLH) and KNOX TALE (KNAT) homeodomain transcription factors. This chain is Transcription repressor OFP8 (OFP8), found in Arabidopsis thaliana (Mouse-ear cress).